A 743-amino-acid polypeptide reads, in one-letter code: Phosphoribosylformylglycinamidine synthase subunit PurL (743 aa).

The active site involves His-50. Residues Tyr-53 and Lys-92 each coordinate ATP. Glu-94 is a Mg(2+) binding site. Residues 95-98 (SHNH) and Arg-117 contribute to the substrate site. His-96 acts as the Proton acceptor in catalysis. Residue Asp-118 participates in Mg(2+) binding. A substrate-binding site is contributed by Gln-241. Asp-269 is a binding site for Mg(2+). A substrate-binding site is contributed by 313–315 (ESQ). 2 residues coordinate ATP: Asp-494 and Gly-531. Asn-532 serves as a coordination point for Mg(2+). A substrate-binding site is contributed by Ser-534.

Belongs to the FGAMS family. As to quaternary structure, monomer. Part of the FGAM synthase complex composed of 1 PurL, 1 PurQ and 2 PurS subunits.

The protein resides in the cytoplasm. The catalysed reaction is N(2)-formyl-N(1)-(5-phospho-beta-D-ribosyl)glycinamide + L-glutamine + ATP + H2O = 2-formamido-N(1)-(5-O-phospho-beta-D-ribosyl)acetamidine + L-glutamate + ADP + phosphate + H(+). The protein operates within purine metabolism; IMP biosynthesis via de novo pathway; 5-amino-1-(5-phospho-D-ribosyl)imidazole from N(2)-formyl-N(1)-(5-phospho-D-ribosyl)glycinamide: step 1/2. In terms of biological role, part of the phosphoribosylformylglycinamidine synthase complex involved in the purines biosynthetic pathway. Catalyzes the ATP-dependent conversion of formylglycinamide ribonucleotide (FGAR) and glutamine to yield formylglycinamidine ribonucleotide (FGAM) and glutamate. The FGAM synthase complex is composed of three subunits. PurQ produces an ammonia molecule by converting glutamine to glutamate. PurL transfers the ammonia molecule to FGAR to form FGAM in an ATP-dependent manner. PurS interacts with PurQ and PurL and is thought to assist in the transfer of the ammonia molecule from PurQ to PurL. This is Phosphoribosylformylglycinamidine synthase subunit PurL from Sinorhizobium fredii (strain HH103).